The primary structure comprises 520 residues: Cytochrome P450 734A1 (520 aa).

A helical transmembrane segment spans residues 13 to 33; that stretch reads VLVLSVILSLVIVKGMSLLWW. Cys-463 lines the heme pocket.

The protein belongs to the cytochrome P450 family. The cofactor is heme.

The protein localises to the membrane. Functionally, cytochrome P450 involved in brassinosteroids (BRs) inactivation and regulation of BRs homeostasis. Inactivates the BRs castasterone (CS) and brassinolide (BL) through carbon 26 hydroxylation. Acts in association with CYP72C1 to inactivate BRs and modulate photomorphogenesis. This Arabidopsis thaliana (Mouse-ear cress) protein is Cytochrome P450 734A1 (CYP734A1).